The primary structure comprises 625 residues: Autophagy-related protein 13b (625 aa).

2 stretches are compositionally biased toward low complexity: residues 322 to 332 and 455 to 477; these read PSVSCSPSPTR and PSGVRPSSSSSPRISFSRSSSRS. 3 disordered regions span residues 322-388, 452-527, and 544-564; these read PSVS…AVPR, FRRP…YPKK, and PPLRQDVSESSRPEICSNNNK. The segment covering 498 to 518 has biased composition (basic and acidic residues); it reads ITDRNSRPGSFDHRGDIHEPF.

This sequence belongs to the ATG13 family. Plant subfamily.

It is found in the cytoplasmic vesicle. The protein localises to the autophagosome. In terms of biological role, involved in autophagy in a nutritional condition dependent manner. The ATG1-ATG13 protein kinase complex regulates downstream events required for autophagosome enclosure and/or vacuolar delivery. Becomes a target of autophagy under nutrient starvation. Connects autophagy to plant nutritional status. This is Autophagy-related protein 13b from Arabidopsis thaliana (Mouse-ear cress).